The primary structure comprises 437 residues: UDP-N-acetylmuramate--L-alanine ligase (437 aa).

Gly108–Ser114 is an ATP binding site.

It belongs to the MurCDEF family.

It is found in the cytoplasm. It catalyses the reaction UDP-N-acetyl-alpha-D-muramate + L-alanine + ATP = UDP-N-acetyl-alpha-D-muramoyl-L-alanine + ADP + phosphate + H(+). It participates in cell wall biogenesis; peptidoglycan biosynthesis. Functionally, cell wall formation. This Staphylococcus epidermidis (strain ATCC 12228 / FDA PCI 1200) protein is UDP-N-acetylmuramate--L-alanine ligase.